The chain runs to 477 residues: MSSNSGDVRLWGGRFADGPAEALAKLSASVHFDWRLAPYDIAGSRAHARVLHKANLLTDDELDRMLAGLDRLEADVADGTFVGTIADEDVHTALERGLLERLGPDLGGKLRAGRSRNDQVATLFRMYLRDHARVIGGLLADLQDALIGLAEAHPDVAMPGRTHLQHAQPVLFAHHVLAHVQALSRDAERLRQWDERTAVSPYGSGALAGSSLGLDPESVAKDLGFEHGSVANSIDGTASRDFVAEFAFITAMIGVNLSRIAEEVIIWNTKEFSFVTLHDAFSTGSSIMPQKKNPDIAELARGKSGRLIGNLTGLMATLKALPLAYNRDLQEDKEPVFDSCDQLEVLLPAFTGMMATLTVHRERMEELAPAGFSLATDIAEWLVKQGVPFRVAHEVAGECVKVAEGEGIELDGLTDEQFAKISSHLTPEVRGVLNVPGALASRDGRGGTAPSAVAVQLAEVRTDVAAQHAWATAKQKN.

It belongs to the lyase 1 family. Argininosuccinate lyase subfamily.

The protein localises to the cytoplasm. The catalysed reaction is 2-(N(omega)-L-arginino)succinate = fumarate + L-arginine. It functions in the pathway amino-acid biosynthesis; L-arginine biosynthesis; L-arginine from L-ornithine and carbamoyl phosphate: step 3/3. The sequence is that of Argininosuccinate lyase from Streptomyces avermitilis (strain ATCC 31267 / DSM 46492 / JCM 5070 / NBRC 14893 / NCIMB 12804 / NRRL 8165 / MA-4680).